A 259-amino-acid chain; its full sequence is tRNA (guanine-N(1)-)-methyltransferase (259 aa).

S-adenosyl-L-methionine-binding positions include Gly-117 and Leu-137–Leu-142.

Belongs to the RNA methyltransferase TrmD family. In terms of assembly, homodimer.

The protein resides in the cytoplasm. The enzyme catalyses guanosine(37) in tRNA + S-adenosyl-L-methionine = N(1)-methylguanosine(37) in tRNA + S-adenosyl-L-homocysteine + H(+). Specifically methylates guanosine-37 in various tRNAs. This is tRNA (guanine-N(1)-)-methyltransferase from Polaromonas sp. (strain JS666 / ATCC BAA-500).